Here is a 109-residue protein sequence, read N- to C-terminus: Small ribosomal subunit protein uS17 (109 aa).

It belongs to the universal ribosomal protein uS17 family. Part of the 30S ribosomal subunit.

One of the primary rRNA binding proteins, it binds specifically to the 5'-end of 16S ribosomal RNA. The protein is Small ribosomal subunit protein uS17 of Halobacterium salinarum (strain ATCC 29341 / DSM 671 / R1).